The chain runs to 139 residues: D-ribose pyranase (139 aa).

Catalysis depends on His-20, which acts as the Proton donor. Residues Asp-28, His-106, and 128–130 contribute to the substrate site; that span reads YAN.

Belongs to the RbsD / FucU family. RbsD subfamily. As to quaternary structure, homodecamer.

Its subcellular location is the cytoplasm. It carries out the reaction beta-D-ribopyranose = beta-D-ribofuranose. It functions in the pathway carbohydrate metabolism; D-ribose degradation; D-ribose 5-phosphate from beta-D-ribopyranose: step 1/2. In terms of biological role, catalyzes the interconversion of beta-pyran and beta-furan forms of D-ribose. The protein is D-ribose pyranase of Salmonella choleraesuis (strain SC-B67).